We begin with the raw amino-acid sequence, 154 residues long: Ribonuclease H (154 aa).

Positions 1-142 constitute an RNase H type-1 domain; sequence MLKHIDLYTD…CDELARDAAS (142 aa). Mg(2+)-binding residues include D10, E48, D70, and D134. Residues 126-147 show a composition bias toward basic and acidic residues; the sequence is GHPENERCDELARDAASGKELA. Positions 126–154 are disordered; that stretch reads GHPENERCDELARDAASGKELAEDTGYQP.

The protein belongs to the RNase H family. In terms of assembly, monomer. Mg(2+) is required as a cofactor.

The protein resides in the cytoplasm. It carries out the reaction Endonucleolytic cleavage to 5'-phosphomonoester.. Its function is as follows. Endonuclease that specifically degrades the RNA of RNA-DNA hybrids. The chain is Ribonuclease H from Aeromonas salmonicida (strain A449).